Consider the following 246-residue polypeptide: tRNA (guanine-N(1)-)-methyltransferase (246 aa).

S-adenosyl-L-methionine is bound by residues Gly117 and 137–142 (IGDYVL).

It belongs to the RNA methyltransferase TrmD family. Homodimer.

It is found in the cytoplasm. It carries out the reaction guanosine(37) in tRNA + S-adenosyl-L-methionine = N(1)-methylguanosine(37) in tRNA + S-adenosyl-L-homocysteine + H(+). Functionally, specifically methylates guanosine-37 in various tRNAs. The sequence is that of tRNA (guanine-N(1)-)-methyltransferase from Acinetobacter baumannii (strain SDF).